The primary structure comprises 1151 residues: DNA repair protein RAD5 (1151 aa).

Disordered regions lie at residues 35-54 (QVDAIQEENANDPEEQIAQG) and 142-161 (KREDDFMQSSQSKKPQRANS). Residues 39–49 (IQEENANDPEE) show a composition bias toward acidic residues. A compositionally biased stretch (polar residues) spans 148–161 (MQSSQSKKPQRANS). Residues 500 to 711 (PTMNSFKNGG…YSLVKFLKLE (212 aa)) enclose the Helicase ATP-binding domain. ATP is bound at residue 513–520 (DEMGLGKT). The DEGH box signature appears at 662-665 (DEGH). Residues 897 to 944 (CSICTAEPIESSSAVVTECEHVFCKECLEEYGNFQKEKSLQQKCPNCR) form an RING-type zinc finger. A Helicase C-terminal domain is found at 979–1146 (ALIRHLQQLQ…RRKRRIEEIQ (168 aa)).

This sequence belongs to the SNF2/RAD54 helicase family.

The protein resides in the cytoplasm. It localises to the nucleus. Functionally, probable helicase, member of the UBC2/RAD6 epistasis group. Functions with DNA repair protein RAD18 in error-free postreplication DNA repair. Involved in the maintenance of wild-type rates of instability of simple repetitive sequences such as poly(GT) repeats. Seems to be involved in maintaining a balance which acts in favor of error-prone non-homologous joining during DNA double-strand breaks repairs. This chain is DNA repair protein RAD5 (RAD5), found in Candida glabrata (strain ATCC 2001 / BCRC 20586 / JCM 3761 / NBRC 0622 / NRRL Y-65 / CBS 138) (Yeast).